The primary structure comprises 124 residues: Ribosome-binding factor A (124 aa).

The protein belongs to the RbfA family. Monomer. Binds 30S ribosomal subunits, but not 50S ribosomal subunits or 70S ribosomes.

It localises to the cytoplasm. In terms of biological role, one of several proteins that assist in the late maturation steps of the functional core of the 30S ribosomal subunit. Associates with free 30S ribosomal subunits (but not with 30S subunits that are part of 70S ribosomes or polysomes). Required for efficient processing of 16S rRNA. May interact with the 5'-terminal helix region of 16S rRNA. The polypeptide is Ribosome-binding factor A (Thiobacillus denitrificans (strain ATCC 25259 / T1)).